The following is a 432-amino-acid chain: Adenylosuccinate synthetase (432 aa).

Residues 12 to 18 and 40 to 42 contribute to the GTP site; these read GDEGKGK and GHT. Asp13 functions as the Proton acceptor in the catalytic mechanism. Mg(2+) is bound by residues Asp13 and Gly40. Residues 13 to 16, 38 to 41, Thr130, Arg144, Gln225, Thr240, and Arg304 contribute to the IMP site; these read DEGK and NAGH. His41 serves as the catalytic Proton donor. 300–306 provides a ligand contact to substrate; that stretch reads ATTGRPR. GTP-binding positions include Arg306, 332–334, and 414–416; these read KLD and SVG.

This sequence belongs to the adenylosuccinate synthetase family. In terms of assembly, homodimer. It depends on Mg(2+) as a cofactor.

The protein resides in the cytoplasm. It carries out the reaction IMP + L-aspartate + GTP = N(6)-(1,2-dicarboxyethyl)-AMP + GDP + phosphate + 2 H(+). Its pathway is purine metabolism; AMP biosynthesis via de novo pathway; AMP from IMP: step 1/2. In terms of biological role, plays an important role in the de novo pathway of purine nucleotide biosynthesis. Catalyzes the first committed step in the biosynthesis of AMP from IMP. This Anaeromyxobacter dehalogenans (strain 2CP-1 / ATCC BAA-258) protein is Adenylosuccinate synthetase.